The sequence spans 430 residues: Histidine--tRNA ligase, chloroplastic (430 aa).

This sequence belongs to the class-II aminoacyl-tRNA synthetase family.

The protein resides in the plastid. Its subcellular location is the chloroplast. It carries out the reaction tRNA(His) + L-histidine + ATP = L-histidyl-tRNA(His) + AMP + diphosphate + H(+). This is Histidine--tRNA ligase, chloroplastic from Pyropia yezoensis (Susabi-nori).